We begin with the raw amino-acid sequence, 406 residues long: MAAAATTSSHLLLLSRQQAAASLQCGLSFRRQPGRLAGGSSAPSVRCMAAVDTASAPAATEASKKSSYEITTLTTWLLKQEQAGTIDGEMTIVLASISTACKQIASLVQRAPISNLTGVQGAVNVQGEDQKKLDVVSNEVFSNCLKSSGRTGVIASEEEDVPVAVEESYSGNYIVVFDPLDGSSNIDAAVSTGSIFGIYSPNDECLADIADDQNLDQVEQRCIVSVCQPGSNLLAAGYCMYSSSVIFVLTIGTGVYVFTLDPMYGEFVLTQEKVQIPKAGKIYAFNEGNYALWDDKLKSYMDSLKEPGPSGKPYSARYIGSLVGDFHRTLLYGGIYGYPRDQKSKNGKLRLLYECAPMSFIVEQAGGKGSDGHQRILDIMPTEIHQRVPLYIGSVEEVEKVEKFLA.

Residues 1-47 (MAAAATTSSHLLLLSRQQAAASLQCGLSFRRQPGRLAGGSSAPSVRC) constitute a chloroplast transit peptide. Residues Glu-128, Glu-157, Asp-178, Leu-180, and Asp-181 each coordinate Mg(2+). A substrate-binding site is contributed by 181–184 (DGSS). A disulfide bridge links Cys-222 with Cys-227. Asn-286, Tyr-318, Tyr-336, Tyr-338, and Lys-348 together coordinate substrate. Glu-354 is a binding site for Mg(2+).

Belongs to the FBPase class 1 family. Homotetramer. Mg(2+) serves as cofactor.

The protein localises to the plastid. It localises to the chloroplast stroma. The catalysed reaction is beta-D-fructose 1,6-bisphosphate + H2O = beta-D-fructose 6-phosphate + phosphate. It functions in the pathway carbohydrate biosynthesis; Calvin cycle. With respect to regulation, inhibited by sodium chloride. Functionally, catalyzes the irreversible reaction from fructose-1,6-bisphosphate to fructose-6-phosphate and inorganic phosphate, to regenerate the primary CO(2) acceptor molecule, ribulose-1,5-bisphosphate. Involved in the regulation of photosynthetic performance and sucrose synthesis. This is Fructose-1,6-bisphosphatase, chloroplastic from Oryza sativa subsp. indica (Rice).